Reading from the N-terminus, the 325-residue chain is DNA-directed RNA polymerase subunit alpha (325 aa).

An alpha N-terminal domain (alpha-NTD) region spans residues 1 to 238 (MSLKSLLKGF…EHLTVFINFE (238 aa)). An alpha C-terminal domain (alpha-CTD) region spans residues 255–325 (LKASLSKHVE…LGLSFGMRDF (71 aa)).

Belongs to the RNA polymerase alpha chain family. Homodimer. The RNAP catalytic core consists of 2 alpha, 1 beta, 1 beta' and 1 omega subunit. When a sigma factor is associated with the core the holoenzyme is formed, which can initiate transcription.

It carries out the reaction RNA(n) + a ribonucleoside 5'-triphosphate = RNA(n+1) + diphosphate. DNA-dependent RNA polymerase catalyzes the transcription of DNA into RNA using the four ribonucleoside triphosphates as substrates. The protein is DNA-directed RNA polymerase subunit alpha of Leptospira interrogans serogroup Icterohaemorrhagiae serovar copenhageni (strain Fiocruz L1-130).